A 247-amino-acid polypeptide reads, in one-letter code: Phycobilisome rod-core linker polypeptide CpcG2 (247 aa).

Residues 11–189 (SSQNQRVPGY…YWRDKLENER (179 aa)) enclose the PBS-linker domain.

It belongs to the phycobilisome linker protein family. In terms of assembly, the phycobilisome is a hemidiscoidal structure that is composed of two distinct substructures: a core complex and a number of rods radiating from the core.

The protein localises to the cellular thylakoid membrane. Rod-core linker protein required for attachment of phycocyanin to allophycocyanin in cores of phycobilisomes. Functionally, linker polypeptides determine the state of aggregation and the location of the disk-shaped phycobiliprotein units within the phycobilisome and modulate their spectroscopic properties in order to mediate a directed and optimal energy transfer. The protein is Phycobilisome rod-core linker polypeptide CpcG2 (cpcG2) of Mastigocladus laminosus (Fischerella sp.).